Reading from the N-terminus, the 131-residue chain is Interleukin-13 (131 aa).

An N-terminal signal peptide occupies residues 1–18 (MALWLTLVIALTCFGGLA). 4 N-linked (GlcNAc...) asparagine glycosylation sites follow: Asn39, Asn50, Asn58, and Asn74. Disulfide bonds link Cys49–Cys78 and Cys66–Cys92.

Belongs to the IL-4/IL-13 family. Interacts with IL13RA2.

The protein localises to the secreted. Functionally, cytokine that plays important roles in allergic inflammation and immune response to parasite infection. Synergizes with IL2 in regulating interferon-gamma synthesis. Stimulates B-cell proliferation, and activation of eosinophils, basophils, and mast cells. Plays an important role in controlling IL33 activity by modulating the production of transmembrane and soluble forms of interleukin-1 receptor-like 1/IL1RL1. Displays the capacity to antagonize Th1-driven proinflammatory immune response and downregulates synthesis of many proinflammatory cytokines including IL1, IL6, IL10, IL12 and TNF-alpha through a mechanism that partially involves suppression of NF-kappa-B. Also functions on nonhematopoietic cells, including endothelial cells where it induces vascular cell adhesion protein 1/VCAM1, which is important in the recruitment of eosinophils. Exerts its biological effects through its receptors which comprises the IL4R chain and the IL13RA1 chain, to activate JAK1 and TYK2, leading to the activation of STAT6. Aside from IL13RA1, another receptor IL13RA2 acts as a high affinity decoy for IL13 and mediates internalization and depletion of extracellular IL13. This chain is Interleukin-13 (IL13), found in Sus scrofa (Pig).